The sequence spans 382 residues: Mannitol-1-phosphate 5-dehydrogenase (382 aa).

An NAD(+)-binding site is contributed by 3–14 (ALHFGAGNIGRG). At K269 the chain carries N6-acetyllysine.

This sequence belongs to the mannitol dehydrogenase family.

The enzyme catalyses D-mannitol 1-phosphate + NAD(+) = beta-D-fructose 6-phosphate + NADH + H(+). The polypeptide is Mannitol-1-phosphate 5-dehydrogenase (Escherichia coli O45:K1 (strain S88 / ExPEC)).